A 336-amino-acid chain; its full sequence is MEIIKTLGEFIIDRQKDYPDASGELTSLFSSIRLAAKILHREINKAGLADITGAAGDENVQGEQQQKLDVYANERFKNALAQRGVVCGIASEEEEQFVRFEETKNLGGKYVVLIDPLDGSSNIDVNVSVGTIFSVYRRVSPEGEHVTEEDFLQPGHKQIAAGYIIYGSSTMLVYTTGNGVNGFTYDPTIGVFCLSHPNLRIPEDGTIYSINEGNYIHFPEGVKKYIKFCQEEDDATQRPYTSRYIGSLVSDFHRNLIKGGIYLYPTSSRYPEGKLRLLYECNPMAFLIEQAGGKAIANPGQRILDIEPTKLHQRCPLFVGSPKMVDKLEQFISELG.

Glu92, Asp115, Leu117, and Asp118 together coordinate Mg(2+). Substrate contacts are provided by residues Asp118–Ser121, Asn211, Tyr244, Tyr262–Tyr264, and Lys274. Glu280 is a binding site for Mg(2+).

The protein belongs to the FBPase class 1 family. In terms of assembly, homotetramer. Mg(2+) serves as cofactor.

It localises to the cytoplasm. It carries out the reaction beta-D-fructose 1,6-bisphosphate + H2O = beta-D-fructose 6-phosphate + phosphate. The protein operates within carbohydrate biosynthesis; gluconeogenesis. The sequence is that of Fructose-1,6-bisphosphatase class 1 from Hahella chejuensis (strain KCTC 2396).